The following is a 312-amino-acid chain: Glycerol-3-phosphate dehydrogenase [NAD(P)+] (312 aa).

NADPH-binding residues include tryptophan 11, arginine 30, arginine 31, and lysine 95. Sn-glycerol 3-phosphate is bound by residues lysine 95, glycine 123, and serine 125. Alanine 127 is an NADPH binding site. Sn-glycerol 3-phosphate is bound by residues lysine 177, aspartate 230, serine 240, arginine 241, and asparagine 242. Lysine 177 (proton acceptor) is an active-site residue. Arginine 241 contacts NADPH. NADPH contacts are provided by valine 265 and glutamate 267.

Belongs to the NAD-dependent glycerol-3-phosphate dehydrogenase family.

The protein resides in the cytoplasm. The enzyme catalyses sn-glycerol 3-phosphate + NAD(+) = dihydroxyacetone phosphate + NADH + H(+). It carries out the reaction sn-glycerol 3-phosphate + NADP(+) = dihydroxyacetone phosphate + NADPH + H(+). Its pathway is membrane lipid metabolism; glycerophospholipid metabolism. In terms of biological role, catalyzes the reduction of the glycolytic intermediate dihydroxyacetone phosphate (DHAP) to sn-glycerol 3-phosphate (G3P), the key precursor for phospholipid synthesis. The chain is Glycerol-3-phosphate dehydrogenase [NAD(P)+] from Helicobacter acinonychis (strain Sheeba).